A 143-amino-acid chain; its full sequence is Large ribosomal subunit protein uL11 (143 aa).

Belongs to the universal ribosomal protein uL11 family. In terms of assembly, part of the ribosomal stalk of the 50S ribosomal subunit. Interacts with L10 and the large rRNA to form the base of the stalk. L10 forms an elongated spine to which L12 dimers bind in a sequential fashion forming a multimeric L10(L12)X complex. In terms of processing, one or more lysine residues are methylated.

Forms part of the ribosomal stalk which helps the ribosome interact with GTP-bound translation factors. The protein is Large ribosomal subunit protein uL11 of Cupriavidus metallidurans (strain ATCC 43123 / DSM 2839 / NBRC 102507 / CH34) (Ralstonia metallidurans).